We begin with the raw amino-acid sequence, 91 residues long: PqqA binding protein (91 aa).

The protein belongs to the PqqD family. Monomer. Interacts with PqqE.

It participates in cofactor biosynthesis; pyrroloquinoline quinone biosynthesis. In terms of biological role, functions as a PqqA binding protein and presents PqqA to PqqE, in the pyrroloquinoline quinone (PQQ) biosynthetic pathway. This chain is PqqA binding protein, found in Pseudomonas putida (strain W619).